The chain runs to 291 residues: Pantothenate synthetase (291 aa).

30-37 is a binding site for ATP; sequence MGYLHVGH. The active-site Proton donor is the H37. Q61 contacts (R)-pantoate. Q61 is a binding site for beta-alanine. Position 147-150 (147-150) interacts with ATP; that stretch reads GEKD. Q153 contacts (R)-pantoate. Residues V176 and 184–187 each bind ATP; that span reads CSSR.

This sequence belongs to the pantothenate synthetase family. Homodimer.

It localises to the cytoplasm. The enzyme catalyses (R)-pantoate + beta-alanine + ATP = (R)-pantothenate + AMP + diphosphate + H(+). The protein operates within cofactor biosynthesis; (R)-pantothenate biosynthesis; (R)-pantothenate from (R)-pantoate and beta-alanine: step 1/1. In terms of biological role, catalyzes the condensation of pantoate with beta-alanine in an ATP-dependent reaction via a pantoyl-adenylate intermediate. The chain is Pantothenate synthetase from Sinorhizobium medicae (strain WSM419) (Ensifer medicae).